We begin with the raw amino-acid sequence, 206 residues long: Guanylate kinase (206 aa).

Residues 3–183 enclose the Guanylate kinase-like domain; the sequence is GNLYILSAPS…ALTELKSILT (181 aa). 10-17 contributes to the ATP binding site; it reads APSGAGKS.

This sequence belongs to the guanylate kinase family.

Its subcellular location is the cytoplasm. The catalysed reaction is GMP + ATP = GDP + ADP. Its function is as follows. Essential for recycling GMP and indirectly, cGMP. This Haemophilus ducreyi (strain 35000HP / ATCC 700724) protein is Guanylate kinase.